A 557-amino-acid chain; its full sequence is Vanadium-dependent bromoperoxidase (557 aa).

Gln1 bears the Pyrrolidone carboxylic acid mark. Residues 1–22 form a disordered region; it reads QTCSTSDDADDPTPPNERDDEA. An intrachain disulfide couples Cys77 to Cys86. Lys341 and Arg349 together coordinate vanadate. His411 is an active-site residue. 3 residues coordinate vanadate: Ser416, Gly417, and His418. The active site involves His418. The cysteines at positions 441 and 462 are disulfide-linked. Arg480 and His486 together coordinate vanadate. An intrachain disulfide couples Cys544 to Cys555.

Belongs to the vanadium-dependent haloperoxidase family. In terms of assembly, homodimer; disulfide-linked. It depends on vanadate as a cofactor.

The enzyme catalyses RH + Br(-) + H2O2 = RBr + 2 H2O.. Functionally, catalyzes the halogenation of organic substrates in the presence of hydrogen peroxide. The polypeptide is Vanadium-dependent bromoperoxidase (Ascophyllum nodosum (Knotted wrack)).